The primary structure comprises 700 residues: Tectonic-2 (700 aa).

Positions 1–25 are cleaved as a signal peptide; the sequence is MGSLSPLSLLWGLLLLQGVLRPLRG. The Extracellular segment spans residues 26-665; sequence DPVFIPPFIR…YYQGEPQSQC (640 aa). N-linked (GlcNAc...) asparagine glycosylation is found at Asn-76, Asn-82, Asn-146, Asn-156, and Asn-389. The chain crosses the membrane as a helical span at residues 666–682; that stretch reads VAKGLMLLSLLMLAILL. Residues 683-700 are Cytoplasmic-facing; that stretch reads RHPWVRMCKARDSAAIYH.

Belongs to the tectonic family. As to quaternary structure, part of the tectonic-like complex (also named B9 complex). Significant expression is observed in brain, kidney and eye.

The protein localises to the membrane. The protein resides in the cytoplasm. It is found in the cytoskeleton. Its subcellular location is the cilium basal body. In terms of biological role, component of the tectonic-like complex, a complex localized at the transition zone of primary cilia and acting as a barrier that prevents diffusion of transmembrane proteins between the cilia and plasma membranes. Required for hedgehog signaling transduction. The sequence is that of Tectonic-2 (Tctn2) from Mus musculus (Mouse).